A 118-amino-acid chain; its full sequence is Vitelline coat lysin (118 aa).

The chain is Vitelline coat lysin from Tegula pfeifferi (Pfeiffer's top shell).